The sequence spans 185 residues: Intraflagellar transport protein 22 homolog (185 aa).

GTP-binding positions include 10–17 (GPCESGKT), 63–67 (DCGGD), and 123–126 (HKPG). Residue Ser137 is modified to Phosphoserine.

This sequence belongs to the small GTPase superfamily. Rab family. Component of the IFT complex B, at least composed of IFT20, IFT22, IFT25, IFT27, IFT46, IFT52, TRAF3IP1/IFT54, IFT57, IFT74, IFT80, IFT81, and IFT88. Interacts with IFT88. Interacts with CFAP61.

Its subcellular location is the cell projection. The protein localises to the cilium. In terms of biological role, small GTPase-like component of the intraflagellar transport (IFT) complex B. This chain is Intraflagellar transport protein 22 homolog (Ift22), found in Mus musculus (Mouse).